The following is a 178-amino-acid chain: ATP synthase subunit delta (178 aa).

The protein belongs to the ATPase delta chain family. In terms of assembly, F-type ATPases have 2 components, F(1) - the catalytic core - and F(0) - the membrane proton channel. F(1) has five subunits: alpha(3), beta(3), gamma(1), delta(1), epsilon(1). F(0) has three main subunits: a(1), b(2) and c(10-14). The alpha and beta chains form an alternating ring which encloses part of the gamma chain. F(1) is attached to F(0) by a central stalk formed by the gamma and epsilon chains, while a peripheral stalk is formed by the delta and b chains.

Its subcellular location is the cell inner membrane. F(1)F(0) ATP synthase produces ATP from ADP in the presence of a proton or sodium gradient. F-type ATPases consist of two structural domains, F(1) containing the extramembraneous catalytic core and F(0) containing the membrane proton channel, linked together by a central stalk and a peripheral stalk. During catalysis, ATP synthesis in the catalytic domain of F(1) is coupled via a rotary mechanism of the central stalk subunits to proton translocation. In terms of biological role, this protein is part of the stalk that links CF(0) to CF(1). It either transmits conformational changes from CF(0) to CF(1) or is implicated in proton conduction. In Teredinibacter turnerae (strain ATCC 39867 / T7901), this protein is ATP synthase subunit delta.